The sequence spans 87 residues: Small ribosomal subunit protein bS20 (87 aa).

A compositionally biased stretch (basic residues) spans 1–11 (MANHKSALKRI). The interval 1–23 (MANHKSALKRIKQTEKRTERNRH) is disordered.

Belongs to the bacterial ribosomal protein bS20 family.

Functionally, binds directly to 16S ribosomal RNA. The chain is Small ribosomal subunit protein bS20 from Geotalea daltonii (strain DSM 22248 / JCM 15807 / FRC-32) (Geobacter daltonii).